The primary structure comprises 266 residues: Ribosomal RNA small subunit methyltransferase A (266 aa).

S-adenosyl-L-methionine-binding residues include N10, I12, G37, E58, D82, and N105.

It belongs to the class I-like SAM-binding methyltransferase superfamily. rRNA adenine N(6)-methyltransferase family. RsmA subfamily.

It localises to the cytoplasm. The enzyme catalyses adenosine(1518)/adenosine(1519) in 16S rRNA + 4 S-adenosyl-L-methionine = N(6)-dimethyladenosine(1518)/N(6)-dimethyladenosine(1519) in 16S rRNA + 4 S-adenosyl-L-homocysteine + 4 H(+). Specifically dimethylates two adjacent adenosines (A1518 and A1519) in the loop of a conserved hairpin near the 3'-end of 16S rRNA in the 30S particle. May play a critical role in biogenesis of 30S subunits. This Mycoplasma mycoides subsp. mycoides SC (strain CCUG 32753 / NCTC 10114 / PG1) protein is Ribosomal RNA small subunit methyltransferase A.